A 419-amino-acid chain; its full sequence is Phosphatidylcholine:ceramide cholinephosphotransferase 1 (419 aa).

The region spanning 13-76 (WSPKKVADWL…LDMIETLKME (64 aa)) is the SAM domain. Ser-14 carries the post-translational modification Phosphoserine. The next 5 helical transmembrane spans lie at 142–162 (LLAFLYALSCFVLTTVMISVV), 190–210 (FSICEINGMILVGLWLFQWLL), 221–241 (FFCIVGTLYLYRCITMYVTTL), 282–302 (MCGDYLYSGHTVMLTLTYLFI), and 310–330 (LWWYHWICWLLSVVGIFCILL). His-291 is an active-site residue. The Cytoplasmic segment spans residues 331 to 419 (AHDHYTVDVV…VKYSRLVNDT (89 aa)). Residues His-334 and Asp-338 contribute to the active site.

This sequence belongs to the sphingomyelin synthase family.

The protein resides in the golgi apparatus membrane. It catalyses the reaction an N-acylsphing-4-enine + a 1,2-diacyl-sn-glycero-3-phosphocholine = a sphingomyelin + a 1,2-diacyl-sn-glycerol. The catalysed reaction is 1-(9Z-octadecenoyl)-2-acyl-sn-3-glycerol + a sphingomyelin = a 1-(9Z-octadecenoyl)-2-acyl-sn-glycero-3-phosphocholine + an N-acylsphing-4-enine. The enzyme catalyses N-hexadecanoylsphinganine + a 1,2-diacyl-sn-glycero-3-phosphocholine = N-hexadecanoyl-sphinganine-1-phosphocholine + a 1,2-diacyl-sn-glycerol. It carries out the reaction N-hexadecanoyl-(4R)-hydroxysphinganine + a 1,2-diacyl-sn-glycero-3-phosphocholine = N-hexadecanoyl-(4R)-hydroxysphinganine-phosphocholine + a 1,2-diacyl-sn-glycerol. It catalyses the reaction an N-acylsphing-4-enine + a 1,2-diacyl-sn-glycero-3-phosphoethanolamine = an N-acylsphing-4-enine 1-phosphoethanolamine + a 1,2-diacyl-sn-glycerol. It participates in sphingolipid metabolism. In terms of biological role, major sphingomyelin synthase at the Golgi apparatus. Catalyzes the reversible transfer of phosphocholine moiety in sphingomyelin biosynthesis: in the forward reaction transfers phosphocholine head group of phosphatidylcholine (PC) on to ceramide (CER) to form ceramide phosphocholine (sphingomyelin, SM) and diacylglycerol (DAG) as by-product, and in the reverse reaction transfers phosphocholine from SM to DAG to form PC and CER. The direction of the reaction depends on the levels of CER and DAG in Golgi membranes. Converts the newly synthesized CER, that is transported from the endoplasmic reticulum to the trans-Golgi by the Cer transport protein (CERT), to SM. Can form a heteromeric complex with glucosylceramide synthase (GCS) increasing SMS activity and reducing glucosylceramide synthesis, a critical mechanism that controls the metabolic fate of CER in the Golgi. Does not use free phosphorylcholine or CDP-choline as donor. Can also transfer phosphoethanolamine head group of phosphatidylethanolamine (PE) on to CER to form ceramide phosphoethanolamine (CPE). Regulates receptor-mediated signal transduction via mitogenic DAG and proapoptotic CER, as well as via SM, a structural component of membrane rafts that serve as platforms for signal transduction and protein sorting. Plays a role in secretory transport via regulation of DAG pool at the Golgi apparatus and its downstream effects on PRKD1. This is Phosphatidylcholine:ceramide cholinephosphotransferase 1 (Sgms1) from Rattus norvegicus (Rat).